A 93-amino-acid chain; its full sequence is MARSIKKGPFVDEKLFDKVQKAVASGNKSVIKTWSRRSTITPDLIGHTFAVHNGKKFIPVFVTENMVGHKLGEFAPTRIFFSHAGDRKSKVRK.

Belongs to the universal ribosomal protein uS19 family.

Protein S19 forms a complex with S13 that binds strongly to the 16S ribosomal RNA. The sequence is that of Small ribosomal subunit protein uS19 from Syntrophus aciditrophicus (strain SB).